The chain runs to 124 residues: ATP synthase subunit H, mitochondrial (124 aa).

The transit peptide at 1–32 (MFPIASRRILLNASVLPLRLCNRNFTTTRISY) directs the protein to the mitochondrion. The segment at 89–124 (NVETAHVAKESEEGESEPIEEDWLVLDDAEETKESH) is disordered. Over residues 100 to 124 (EEGESEPIEEDWLVLDDAEETKESH) the composition is skewed to acidic residues.

It belongs to the ATPase h subunit family. F-type ATPases have 2 components, CF(1) - the catalytic core - and CF(0) - the membrane proton channel. In yeast, the dimeric form of ATP synthase consists of 17 polypeptides: alpha, beta, gamma, delta, epsilon, 4 (B), 5 (OSCP), 6 (A), 8, 9 (C), d, E (Tim11), f, g, h, i/j and k.

It localises to the mitochondrion. Its subcellular location is the mitochondrion inner membrane. Its function is as follows. Mitochondrial membrane ATP synthase (F(1)F(0) ATP synthase or Complex V) produces ATP from ADP in the presence of a proton gradient across the membrane which is generated by electron transport complexes of the respiratory chain. F-type ATPases consist of two structural domains, F(1) - containing the extramembraneous catalytic core and F(0) - containing the membrane proton channel, linked together by a central stalk and a peripheral stalk. During catalysis, ATP synthesis in the catalytic domain of F(1) is coupled via a rotary mechanism of the central stalk subunits to proton translocation. Part of the complex F(0) domain. Minor subunit located with subunit a in the membrane. The polypeptide is ATP synthase subunit H, mitochondrial (ATP14) (Saccharomyces cerevisiae (strain ATCC 204508 / S288c) (Baker's yeast)).